A 335-amino-acid chain; its full sequence is Glycerol-3-phosphate dehydrogenase [NAD(P)+] (335 aa).

Residues S12, W13, and K107 each coordinate NADPH. Sn-glycerol 3-phosphate contacts are provided by K107, G138, and S140. A142 contributes to the NADPH binding site. 5 residues coordinate sn-glycerol 3-phosphate: K193, D246, S256, R257, and N258. K193 (proton acceptor) is an active-site residue. R257 contributes to the NADPH binding site. NADPH-binding residues include V281 and E283.

Belongs to the NAD-dependent glycerol-3-phosphate dehydrogenase family.

It localises to the cytoplasm. The catalysed reaction is sn-glycerol 3-phosphate + NAD(+) = dihydroxyacetone phosphate + NADH + H(+). The enzyme catalyses sn-glycerol 3-phosphate + NADP(+) = dihydroxyacetone phosphate + NADPH + H(+). The protein operates within membrane lipid metabolism; glycerophospholipid metabolism. Functionally, catalyzes the reduction of the glycolytic intermediate dihydroxyacetone phosphate (DHAP) to sn-glycerol 3-phosphate (G3P), the key precursor for phospholipid synthesis. The protein is Glycerol-3-phosphate dehydrogenase [NAD(P)+] of Geobacter sp. (strain M21).